The chain runs to 183 residues: uncharacterized protein (183 aa).

Positions 27 to 170 (MIKLIDSARS…VAEIMMQKHL (144 aa)) constitute an SIS domain.

The protein belongs to the SIS family. PHI subfamily.

This is an uncharacterized protein from Archaeoglobus fulgidus (strain ATCC 49558 / DSM 4304 / JCM 9628 / NBRC 100126 / VC-16).